Consider the following 269-residue polypeptide: Tryptophan synthase alpha chain (269 aa).

Catalysis depends on proton acceptor residues Glu49 and Asp60.

It belongs to the TrpA family. In terms of assembly, tetramer of two alpha and two beta chains.

It carries out the reaction (1S,2R)-1-C-(indol-3-yl)glycerol 3-phosphate + L-serine = D-glyceraldehyde 3-phosphate + L-tryptophan + H2O. Its pathway is amino-acid biosynthesis; L-tryptophan biosynthesis; L-tryptophan from chorismate: step 5/5. The alpha subunit is responsible for the aldol cleavage of indoleglycerol phosphate to indole and glyceraldehyde 3-phosphate. The sequence is that of Tryptophan synthase alpha chain from Pseudomonas putida (Arthrobacter siderocapsulatus).